A 334-amino-acid chain; its full sequence is 3-ketodihydrosphingosine reductase (334 aa).

Positions 1-20 are cleaved as a signal peptide; that stretch reads MIIYILFSLLAAVIVHLVYK. NADPH-binding residues include Gly-36, Ser-38, Ser-39, Gly-40, Arg-62, Lys-66, Asp-100, and Ile-101. A GXSXG motif is present at residues 36-40; it reads GGSSG. Ser-182 (proton donor) is an active-site residue. Tyr-196 serves as the catalytic Proton acceptor. Residues Tyr-196 and Lys-200 each coordinate NADP(+). The active-site Lowers pKa of active site Tyr is the Lys-200.

Belongs to the short-chain dehydrogenases/reductases (SDR) family.

It is found in the endoplasmic reticulum. The enzyme catalyses sphinganine + NADP(+) = 3-oxosphinganine + NADPH + H(+). The protein operates within lipid metabolism; sphingolipid metabolism. In terms of biological role, catalyzes the reduction of 3'-oxosphinganine (3-ketodihydrosphingosine/KDS) to sphinganine (dihydrosphingosine/DHS), the second step of de novo sphingolipid biosynthesis. In Dictyostelium discoideum (Social amoeba), this protein is 3-ketodihydrosphingosine reductase (ksrA-1).